Consider the following 1299-residue polypeptide: Sophorolipid transporter (1299 aa).

Residues 1-64 (MVDDIQVEKR…FCTPLDVFLE (64 aa)) lie on the Cytoplasmic side of the membrane. The helical transmembrane segment at 65-85 (ILALFFAAVHGAALPMFTLVV) threads the bilayer. One can recognise an ABC transmembrane type-1 1 domain in the interval 65–356 (ILALFFAAVH…IAPNVRFLVK (292 aa)). Residues 86–114 (GAIFNTFRDFTSYDLKGNEFQHKVNHLSL) lie on the Extracellular side of the membrane. A helical transmembrane segment spans residues 115–135 (YFVYIGIGMLGSAFLESFLLV). The Cytoplasmic portion of the chain corresponds to 136–187 (DRGEVLAGRYRKHYLSAVIRQNIAFYDKLGGGEVSTRIINDTNSIQEAISDK). A helical membrane pass occupies residues 188-208 (LGNVVQGIASFIAATVISFAS). Residues 209–214 (QWKLAC) lie on the Extracellular side of the membrane. The helical transmembrane segment at 215–235 (ILLSAVGFMVITMGTGATFMA) threads the bilayer. Residues 236-293 (KYQLRSDAIYSQSGATVAEEALSAVRTTVAFGAQPHLAVKYEKVLDRVVKESKRSSYS) are Cytoplasmic-facing. A helical membrane pass occupies residues 294–314 (LGVMLACIWASTFWVYALALW). Residues 315 to 326 (QGSREIVSGSAD) are Extracellular-facing. Residues 327–347 (VGKIIVVITAMLLGSFQLGNI) traverse the membrane as a helical segment. Residues 348–725 (APNVRFLVKG…WGLNRKEWGY (378 aa)) are Cytoplasmic-facing. One can recognise an ABC transporter 1 domain in the interval 393-638 (IELKNVKFRY…EGPYKALVDA (246 aa)). Residue 428-435 (GASGSGKS) participates in ATP binding. Positions 681-690 (SAGTQTTQPP) are enriched in polar residues. The disordered stretch occupies residues 681–703 (SAGTQTTQPPEYQENDIPGVRNP). The helical transmembrane segment at 726–746 (ILIGSLASIILGYCYPAMAII) threads the bilayer. Residues 727–1016 (LIGSLASIIL…IFSYAPNMNS (290 aa)) form the ABC transmembrane type-1 2 domain. At 747-769 (TGQTTGSMVLPPSEYGKMRHVVN) the chain is on the extracellular side. A helical transmembrane segment spans residues 770-790 (IMGWWYFFVGCISFMTAFITI). Residues 791–848 (AALSLASDKLVKNIRLALFRQLMRMDIAFFDHKNNTPGALTSILAKEAKMIEGLSGAT) lie on the Cytoplasmic side of the membrane. A helical transmembrane segment spans residues 849–869 (LGQIQQSLVTLIGGIVTGIPF). Residues 870–874 (NWRIG) are Extracellular-facing. Residues 875–895 (LVATSVVPVMLVCGFVRVWVL) form a helical membrane-spanning segment. The Cytoplasmic portion of the chain corresponds to 896-954 (TQLSDRAREVYERSGSMASEYTSAVRTVQSLTRELDVVVKYTKTVDSQIFSSRIAIARS). A helical transmembrane segment spans residues 955 to 975 (ALYYALSEGMTPWVVALVFWW). Residues 976-987 (GSTVMRRGEASV) lie on the Extracellular side of the membrane. Residues 988 to 1008 (AGYMTVFMAIITGSQAAGQIF) traverse the membrane as a helical segment. Residues 1009 to 1299 (SYAPNMNSAK…LVNLQGLGEI (291 aa)) lie on the Cytoplasmic side of the membrane. Positions 1053-1293 (IEFRHVNFRY…NGWYAELVNL (241 aa)) constitute an ABC transporter 2 domain. ATP is bound at residue 1088-1095 (GASGCGKS).

This sequence belongs to the ABC transporter superfamily. ABCB family. Multidrug resistance exporter (TC 3.A.1.201) subfamily.

The protein resides in the cell membrane. Transports acidic acylated and non-acylated sophorolipids (SLs) into the extracellular space, where they can be lactonized by lactone esterase. This Starmerella bombicola (Yeast) protein is Sophorolipid transporter (mdr).